A 352-amino-acid polypeptide reads, in one-letter code: Nicotinate-nucleotide--dimethylbenzimidazole phosphoribosyltransferase (352 aa).

The active-site Proton acceptor is Glu318.

Belongs to the CobT family.

It catalyses the reaction 5,6-dimethylbenzimidazole + nicotinate beta-D-ribonucleotide = alpha-ribazole 5'-phosphate + nicotinate + H(+). It participates in nucleoside biosynthesis; alpha-ribazole biosynthesis; alpha-ribazole from 5,6-dimethylbenzimidazole: step 1/2. In terms of biological role, catalyzes the synthesis of alpha-ribazole-5'-phosphate from nicotinate mononucleotide (NAMN) and 5,6-dimethylbenzimidazole (DMB). The chain is Nicotinate-nucleotide--dimethylbenzimidazole phosphoribosyltransferase from Azotobacter vinelandii (strain DJ / ATCC BAA-1303).